A 172-amino-acid polypeptide reads, in one-letter code: Putative phosphoesterase BCAH820_1309 (172 aa).

His-34 serves as the catalytic Proton donor. 2 consecutive short sequence motifs (HXTX) follow at residues 34–37 (HITL) and 115–118 (HLTI). His-115 (proton acceptor) is an active-site residue.

This sequence belongs to the 2H phosphoesterase superfamily. YjcG family.

The sequence is that of Putative phosphoesterase BCAH820_1309 from Bacillus cereus (strain AH820).